Consider the following 96-residue polypeptide: Neurotoxin 23 (96 aa).

Positions Met1–Gln22 are cleaved as a signal peptide. The region spanning Phe26 to Asn89 is the LCN-type CS-alpha/beta domain. Disulfide bonds link Cys40–Cys63, Cys49–Cys68, and Cys53–Cys70.

It belongs to the long (3 C-C) scorpion toxin superfamily. In terms of tissue distribution, expressed by the venom gland.

The protein resides in the secreted. In Lychas mucronatus (Chinese swimming scorpion), this protein is Neurotoxin 23.